The sequence spans 107 residues: uncharacterized protein (107 aa).

The protein belongs to the HesB/IscA family.

This is an uncharacterized protein from Azotobacter vinelandii.